A 260-amino-acid polypeptide reads, in one-letter code: Flavin-dependent thymidylate synthase (260 aa).

A ThyX domain is found at 1-202 (MKIKLVSYSK…PRLFKYAGPN (202 aa)). FAD-binding positions include S55, 79–81 (RHR), and Q87. Residues 76–79 (QLVR), 87–91 (QMSHR), and R141 contribute to the dUMP site. The short motif at 79-89 (RHRIASYTQMS) is the ThyX motif element. FAD-binding positions include 157–159 (NAR) and N163. DUMP is bound at residue R168. Residue R168 is the Involved in ionization of N3 of dUMP, leading to its activation of the active site.

The protein belongs to the thymidylate synthase ThyX family. In terms of assembly, homotetramer. FAD serves as cofactor.

It catalyses the reaction dUMP + (6R)-5,10-methylene-5,6,7,8-tetrahydrofolate + NADPH + H(+) = dTMP + (6S)-5,6,7,8-tetrahydrofolate + NADP(+). The protein operates within pyrimidine metabolism; dTTP biosynthesis. Functionally, catalyzes the reductive methylation of 2'-deoxyuridine-5'-monophosphate (dUMP) to 2'-deoxythymidine-5'-monophosphate (dTMP) while utilizing 5,10-methylenetetrahydrofolate (mTHF) as the methyl donor, and NADPH and FADH(2) as the reductant. This chain is Flavin-dependent thymidylate synthase, found in Sulfolobus acidocaldarius (strain ATCC 33909 / DSM 639 / JCM 8929 / NBRC 15157 / NCIMB 11770).